Reading from the N-terminus, the 74-residue chain is MCIAQYIYVRLAVNLPTPETYDELQRAYDFFNEKLFSNELPPCLITLQREKRTYGYCSFKRFVGRESGYTVDEI.

This is an uncharacterized protein from Salmonella typhimurium.